Consider the following 96-residue polypeptide: Fluoride-specific ion channel FluC 1 (96 aa).

2 helical membrane-spanning segments follow: residues 4–24 (LIQG…RLAL) and 26–46 (LWLG…AFLM). The Na(+) site is built by G61 and T64. A helical transmembrane segment spans residues 69–89 (MMLNDVSFYFFTAVGCILAWL).

Belongs to the fluoride channel Fluc/FEX (TC 1.A.43) family.

It is found in the cell membrane. It carries out the reaction fluoride(in) = fluoride(out). With respect to regulation, na(+) is not transported, but it plays an essential structural role and its presence is essential for fluoride channel function. Its function is as follows. Fluoride-specific ion channel. Important for reducing fluoride concentration in the cell, thus reducing its toxicity. This chain is Fluoride-specific ion channel FluC 1, found in Corynebacterium glutamicum (strain ATCC 13032 / DSM 20300 / JCM 1318 / BCRC 11384 / CCUG 27702 / LMG 3730 / NBRC 12168 / NCIMB 10025 / NRRL B-2784 / 534).